Reading from the N-terminus, the 228-residue chain is ATP-dependent dethiobiotin synthetase BioD (228 aa).

Glutamate 12 to threonine 17 contacts ATP. Threonine 16 contacts Mg(2+). The active site involves lysine 37. Serine 41 provides a ligand contact to substrate. ATP is bound by residues aspartate 54, glutamate 116–glycine 119, and proline 205–leucine 207. Mg(2+) contacts are provided by aspartate 54 and glutamate 116.

This sequence belongs to the dethiobiotin synthetase family. Homodimer. Requires Mg(2+) as cofactor.

The protein resides in the cytoplasm. It catalyses the reaction (7R,8S)-7,8-diammoniononanoate + CO2 + ATP = (4R,5S)-dethiobiotin + ADP + phosphate + 3 H(+). The protein operates within cofactor biosynthesis; biotin biosynthesis; biotin from 7,8-diaminononanoate: step 1/2. Catalyzes a mechanistically unusual reaction, the ATP-dependent insertion of CO2 between the N7 and N8 nitrogen atoms of 7,8-diaminopelargonic acid (DAPA, also called 7,8-diammoniononanoate) to form a ureido ring. The sequence is that of ATP-dependent dethiobiotin synthetase BioD from Pseudomonas aeruginosa (strain ATCC 15692 / DSM 22644 / CIP 104116 / JCM 14847 / LMG 12228 / 1C / PRS 101 / PAO1).